The chain runs to 88 residues: Small ribosomal subunit protein uS15 (88 aa).

The protein belongs to the universal ribosomal protein uS15 family. In terms of assembly, part of the 30S ribosomal subunit. Forms a bridge to the 50S subunit in the 70S ribosome, contacting the 23S rRNA.

Its function is as follows. One of the primary rRNA binding proteins, it binds directly to 16S rRNA where it helps nucleate assembly of the platform of the 30S subunit by binding and bridging several RNA helices of the 16S rRNA. Functionally, forms an intersubunit bridge (bridge B4) with the 23S rRNA of the 50S subunit in the ribosome. In Mesomycoplasma hyopneumoniae (strain 232) (Mycoplasma hyopneumoniae), this protein is Small ribosomal subunit protein uS15.